Consider the following 364-residue polypeptide: Rhomboid domain-containing protein 2 (364 aa).

5 helical membrane passes run 11–31 (WCLCPEVPSATFFTALLSLLV), 63–83 (LVTYIFVYENPISLLCGAIII), 100–120 (CFFTVIFAIFSAIIFLSFEAV), 158–178 (FGMVVPSVLVPWLLLGASWLI), and 184–204 (LSNVCGLSIGLAYGLTYCYSI). Disordered stretches follow at residues 242–282 (AQSR…KLAS) and 317–364 (SSVY…VPMP). 2 stretches are compositionally biased toward polar residues: residues 267–276 (HPVSQTQHAS) and 317–329 (SSVYPASAGTSLG).

It belongs to the peptidase S54 family.

The protein resides in the golgi apparatus. Its subcellular location is the cis-Golgi network membrane. In Homo sapiens (Human), this protein is Rhomboid domain-containing protein 2 (RHBDD2).